The following is a 445-amino-acid chain: tRNA(Ile)-lysidine synthase (445 aa).

38–43 (SGGLDS) contacts ATP.

The protein belongs to the tRNA(Ile)-lysidine synthase family.

The protein resides in the cytoplasm. The enzyme catalyses cytidine(34) in tRNA(Ile2) + L-lysine + ATP = lysidine(34) in tRNA(Ile2) + AMP + diphosphate + H(+). Ligates lysine onto the cytidine present at position 34 of the AUA codon-specific tRNA(Ile) that contains the anticodon CAU, in an ATP-dependent manner. Cytidine is converted to lysidine, thus changing the amino acid specificity of the tRNA from methionine to isoleucine. The polypeptide is tRNA(Ile)-lysidine synthase (Neisseria gonorrhoeae (strain ATCC 700825 / FA 1090)).